Here is a 348-residue protein sequence, read N- to C-terminus: Holliday junction branch migration complex subunit RuvB (348 aa).

The segment at 1–20 is disordered; that stretch reads MKPPARMVSPERRSDDVGDT. The segment at 1 to 183 is large ATPase domain (RuvB-L); that stretch reads MKPPARMVSP…FGIPIRLNFY (183 aa). ATP contacts are provided by residues Leu22, Arg23, Gly64, Lys67, Thr68, Thr69, 130-132, Arg173, Tyr183, and Arg220; that span reads EDF. Thr68 is a Mg(2+) binding site. Positions 184-254 are small ATPAse domain (RuvB-S); it reads TVEELEGIVT…IADHALSALE (71 aa). The interval 257–348 is head domain (RuvB-H); that stretch reads AAGLDAMDRR…QIGLFGNDDD (92 aa). Positions 293, 312, and 317 each coordinate DNA.

This sequence belongs to the RuvB family. In terms of assembly, homohexamer. Forms an RuvA(8)-RuvB(12)-Holliday junction (HJ) complex. HJ DNA is sandwiched between 2 RuvA tetramers; dsDNA enters through RuvA and exits via RuvB. An RuvB hexamer assembles on each DNA strand where it exits the tetramer. Each RuvB hexamer is contacted by two RuvA subunits (via domain III) on 2 adjacent RuvB subunits; this complex drives branch migration. In the full resolvosome a probable DNA-RuvA(4)-RuvB(12)-RuvC(2) complex forms which resolves the HJ.

It is found in the cytoplasm. It catalyses the reaction ATP + H2O = ADP + phosphate + H(+). Functionally, the RuvA-RuvB-RuvC complex processes Holliday junction (HJ) DNA during genetic recombination and DNA repair, while the RuvA-RuvB complex plays an important role in the rescue of blocked DNA replication forks via replication fork reversal (RFR). RuvA specifically binds to HJ cruciform DNA, conferring on it an open structure. The RuvB hexamer acts as an ATP-dependent pump, pulling dsDNA into and through the RuvAB complex. RuvB forms 2 homohexamers on either side of HJ DNA bound by 1 or 2 RuvA tetramers; 4 subunits per hexamer contact DNA at a time. Coordinated motions by a converter formed by DNA-disengaged RuvB subunits stimulates ATP hydrolysis and nucleotide exchange. Immobilization of the converter enables RuvB to convert the ATP-contained energy into a lever motion, pulling 2 nucleotides of DNA out of the RuvA tetramer per ATP hydrolyzed, thus driving DNA branch migration. The RuvB motors rotate together with the DNA substrate, which together with the progressing nucleotide cycle form the mechanistic basis for DNA recombination by continuous HJ branch migration. Branch migration allows RuvC to scan DNA until it finds its consensus sequence, where it cleaves and resolves cruciform DNA. In Bradyrhizobium sp. (strain ORS 278), this protein is Holliday junction branch migration complex subunit RuvB.